A 336-amino-acid polypeptide reads, in one-letter code: Dihydroorotate dehydrogenase (quinone) (336 aa).

Residues 62 to 66 and Thr86 contribute to the FMN site; that span reads AGLDK. Position 66 (Lys66) interacts with substrate. 111–115 is a binding site for substrate; the sequence is NRMGF. Positions 139 and 172 each coordinate FMN. Asn172 contributes to the substrate binding site. Ser175 serves as the catalytic Nucleophile. A substrate-binding site is contributed by Asn177. The FMN site is built by Lys217 and Thr245. 246-247 lines the substrate pocket; the sequence is NT. Residues Gly268, Gly297, and 318–319 each bind FMN; that span reads YS.

It belongs to the dihydroorotate dehydrogenase family. Type 2 subfamily. Monomer. FMN is required as a cofactor.

Its subcellular location is the cell membrane. The enzyme catalyses (S)-dihydroorotate + a quinone = orotate + a quinol. It participates in pyrimidine metabolism; UMP biosynthesis via de novo pathway; orotate from (S)-dihydroorotate (quinone route): step 1/1. In terms of biological role, catalyzes the conversion of dihydroorotate to orotate with quinone as electron acceptor. This chain is Dihydroorotate dehydrogenase (quinone), found in Pectobacterium atrosepticum (strain SCRI 1043 / ATCC BAA-672) (Erwinia carotovora subsp. atroseptica).